The following is a 412-amino-acid chain: Glucose-1-phosphate adenylyltransferase (412 aa).

Alpha-D-glucose 1-phosphate contacts are provided by residues tyrosine 98, glycine 163, glutamate 178–lysine 179, and serine 189.

Belongs to the bacterial/plant glucose-1-phosphate adenylyltransferase family. Homotetramer.

It carries out the reaction alpha-D-glucose 1-phosphate + ATP + H(+) = ADP-alpha-D-glucose + diphosphate. Its pathway is glycan biosynthesis; glycogen biosynthesis. In terms of biological role, involved in the biosynthesis of ADP-glucose, a building block required for the elongation reactions to produce glycogen. Catalyzes the reaction between ATP and alpha-D-glucose 1-phosphate (G1P) to produce pyrophosphate and ADP-Glc. This chain is Glucose-1-phosphate adenylyltransferase, found in Thermosipho melanesiensis (strain DSM 12029 / CIP 104789 / BI429).